Reading from the N-terminus, the 358-residue chain is Transcription factor PCF6 (358 aa).

The tract at residues Met-1 to Met-29 is disordered. Gly residues predominate over residues Asp-7–Gly-16. The region spanning Gly-52–Leu-110 is the TCP domain. 2 disordered regions span residues Ala-127–Val-163 and Ala-282–Gln-308. 2 stretches are compositionally biased toward polar residues: residues Leu-143 to Ser-156 and Gly-285 to Ser-296.

Forms homodimers and heterodimers.

Its subcellular location is the nucleus. Its function is as follows. Transcription activator. Binds the promoter core sequence 5'-GGNCC-3'. The sequence is that of Transcription factor PCF6 (PCF6) from Oryza sativa subsp. indica (Rice).